The chain runs to 388 residues: Mannitol-1-phosphate 5-dehydrogenase (388 aa).

An NAD(+)-binding site is contributed by 5–16; that stretch reads AVHFGGGNIGRG. Residue lysine 213 is part of the active site.

This sequence belongs to the mannitol dehydrogenase family. Monomer.

It catalyses the reaction D-mannitol 1-phosphate + NAD(+) = beta-D-fructose 6-phosphate + NADH + H(+). Its function is as follows. Catalyzes the NAD(H)-dependent interconversion of D-fructose 6-phosphate and D-mannitol 1-phosphate in the mannitol metabolic pathway. The chain is Mannitol-1-phosphate 5-dehydrogenase from Penicillium rubens (strain ATCC 28089 / DSM 1075 / NRRL 1951 / Wisconsin 54-1255) (Penicillium chrysogenum).